The sequence spans 323 residues: tRNA(Ile)-lysidine synthase (323 aa).

33-38 (SGGPDS) contacts ATP.

The protein belongs to the tRNA(Ile)-lysidine synthase family.

The protein localises to the cytoplasm. The enzyme catalyses cytidine(34) in tRNA(Ile2) + L-lysine + ATP = lysidine(34) in tRNA(Ile2) + AMP + diphosphate + H(+). Its function is as follows. Ligates lysine onto the cytidine present at position 34 of the AUA codon-specific tRNA(Ile) that contains the anticodon CAU, in an ATP-dependent manner. Cytidine is converted to lysidine, thus changing the amino acid specificity of the tRNA from methionine to isoleucine. This is tRNA(Ile)-lysidine synthase from Mycobacterium bovis (strain ATCC BAA-935 / AF2122/97).